The primary structure comprises 511 residues: Probable lipid II flippase MurJ (511 aa).

Helical transmembrane passes span 31–51 (IFGAGMATDAFFVAFKLPNLL), 90–110 (LLTLALAVVTVAGMLAAPWVI), 130–150 (LLKITFPYILLISLASLVGAI), 159–179 (IPAFAPTLLNISMIGFALFAA), 182–202 (FNPPVLALAWAVTVGGVLQLV), 237–257 (ILGVSVSQISLIINTIFASFL), 271–291 (LMEFPSGVLGVALGTILLPSL), 314–334 (CFLLALPSAVALGILSGPLTV), 354–374 (LIAYSVGLIGLIVVKVLAPGF), 383–403 (PVKIAIVTLILTQLMNLAFIG), 407–427 (HAGLSLSIGLAACLNASLLYW), 443–463 (AFLLRLVVAVLVMSGVLLGML), and 481–501 (LMAVVLAGIAAYFAALAVLGF).

Belongs to the MurJ/MviN family.

The protein localises to the cell inner membrane. Its pathway is cell wall biogenesis; peptidoglycan biosynthesis. In terms of biological role, involved in peptidoglycan biosynthesis. Transports lipid-linked peptidoglycan precursors from the inner to the outer leaflet of the cytoplasmic membrane. The protein is Probable lipid II flippase MurJ of Escherichia coli O157:H7.